The chain runs to 304 residues: Ribosome-inactivating protein 9 (304 aa).

The active site involves Glu-208.

Belongs to the ribosome-inactivating protein family. Type 1 RIP subfamily. As to quaternary structure, monomer. Accumulates to high levels in seeds.

It localises to the cytoplasm. It carries out the reaction Endohydrolysis of the N-glycosidic bond at one specific adenosine on the 28S rRNA.. Functionally, possesses features of some constitutive defense agent. The coordinate Opaque-2-controlled synthesis of this protein and the major seed storage proteins (zeins) may provide the germinating seedling with both nutritional benefits and protection against pathogen invasion of the surrounding endosperm. The sequence is that of Ribosome-inactivating protein 9 (CRIP9) from Zea mays (Maize).